A 445-amino-acid chain; its full sequence is Arabinooligosaccharide-binding protein (445 aa).

An N-terminal signal peptide occupies residues 1 to 20 (MGKNILFFSFVGVMVLVLVA). Cysteine 21 is lipidated: N-palmitoyl cysteine. Cysteine 21 carries S-diacylglycerol cysteine lipidation.

The protein belongs to the bacterial solute-binding protein 1 family. In terms of assembly, the complex is composed of two ATP-binding proteins (MsmX), two transmembrane proteins (AraP and AraQ) and a solute-binding protein (AraN).

The protein resides in the cell membrane. Part of the ABC transporter complex AraNPQ involved in the uptake of arabinooligosaccharides. AraN captures the substrate and delivers it to the two transmembrane components. This Halalkalibacterium halodurans (strain ATCC BAA-125 / DSM 18197 / FERM 7344 / JCM 9153 / C-125) (Bacillus halodurans) protein is Arabinooligosaccharide-binding protein (araN).